The following is a 408-amino-acid chain: 4-hydroxy-3-methylbut-2-en-1-yl diphosphate synthase (ferredoxin) (408 aa).

Residues 1–21 (MQTLPTPTTSSNTANQSTFDT) show a composition bias toward polar residues. Residues 1–26 (MQTLPTPTTSSNTANQSTFDTTIKRR) are disordered. Residues Cys317, Cys320, Cys351, and Glu358 each coordinate [4Fe-4S] cluster.

It belongs to the IspG family. Requires [4Fe-4S] cluster as cofactor.

It carries out the reaction (2E)-4-hydroxy-3-methylbut-2-enyl diphosphate + 2 oxidized [2Fe-2S]-[ferredoxin] + H2O = 2-C-methyl-D-erythritol 2,4-cyclic diphosphate + 2 reduced [2Fe-2S]-[ferredoxin] + H(+). It participates in isoprenoid biosynthesis; isopentenyl diphosphate biosynthesis via DXP pathway; isopentenyl diphosphate from 1-deoxy-D-xylulose 5-phosphate: step 5/6. Its function is as follows. Converts 2C-methyl-D-erythritol 2,4-cyclodiphosphate (ME-2,4cPP) into 1-hydroxy-2-methyl-2-(E)-butenyl 4-diphosphate. The polypeptide is 4-hydroxy-3-methylbut-2-en-1-yl diphosphate synthase (ferredoxin) (Trichormus variabilis (strain ATCC 29413 / PCC 7937) (Anabaena variabilis)).